The primary structure comprises 274 residues: ATP synthase subunit a (274 aa).

The next 5 membrane-spanning stretches (helical) occupy residues 43–63 (TLNI…LLVF), 103–123 (VIAP…MMDL), 149–169 (DVSI…FYSI), 223–243 (LIFI…LSVP), and 245–265 (AIFH…LTIV).

It belongs to the ATPase A chain family. As to quaternary structure, F-type ATPases have 2 components, CF(1) - the catalytic core - and CF(0) - the membrane proton channel. CF(1) has five subunits: alpha(3), beta(3), gamma(1), delta(1), epsilon(1). CF(0) has three main subunits: a(1), b(2) and c(9-12). The alpha and beta chains form an alternating ring which encloses part of the gamma chain. CF(1) is attached to CF(0) by a central stalk formed by the gamma and epsilon chains, while a peripheral stalk is formed by the delta and b chains.

The protein resides in the cell inner membrane. Its function is as follows. Key component of the proton channel; it plays a direct role in the translocation of protons across the membrane. This Yersinia pestis bv. Antiqua (strain Antiqua) protein is ATP synthase subunit a.